Reading from the N-terminus, the 175-residue chain is Ribosome maturation factor RimM (175 aa).

One can recognise a PRC barrel domain in the interval 96–175 (EEDYYWHDLI…TITVDWDAGF (80 aa)).

This sequence belongs to the RimM family. As to quaternary structure, binds ribosomal protein uS19.

It is found in the cytoplasm. Its function is as follows. An accessory protein needed during the final step in the assembly of 30S ribosomal subunit, possibly for assembly of the head region. Essential for efficient processing of 16S rRNA. May be needed both before and after RbfA during the maturation of 16S rRNA. It has affinity for free ribosomal 30S subunits but not for 70S ribosomes. In Haemophilus ducreyi (strain 35000HP / ATCC 700724), this protein is Ribosome maturation factor RimM.